The following is a 616-amino-acid chain: Telomeric repeat-binding factor 2-interacting protein 1 (616 aa).

The 84-residue stretch at 15-98 (FLDPGGQSMR…QQLDPNDYAI (84 aa)) folds into the BRCT domain. The 58-residue stretch at 112–169 (NQGSGRLGYSSEEDAAILKFIEKRQQDAKGNLVWKEMEKRHVTEHSWQSMKDRFLKHL) folds into the Myb-like domain. The interval 174–518 (ADKPTKKSPI…CSHIRETPEE (345 aa)) is disordered. Residues 232–245 (PERASSPPEEPQAA) are compositionally biased toward low complexity. A compositionally biased stretch (polar residues) spans 246–255 (GQPSQASSND). Composition is skewed to basic and acidic residues over residues 271–288 (ENPR…EHSS) and 344–358 (RSSR…RDIP). 2 stretches are compositionally biased toward polar residues: residues 363-382 (EQSS…SDSG) and 397-415 (NANS…ASTP). The span at 431-444 (EDSDVMDDSEECEN) shows a compositional bias: acidic residues. Positions 468–480 (REPESQAEHHEET) are enriched in basic and acidic residues. The short motif at 597-613 (SKFGEEEVTRRKSFLAT) is the Nuclear localization signal element.

It belongs to the RAP1 family. As to quaternary structure, homodimer. Component of the shelterin complex (telosome). Interacts with terf2; the interaction is direct.

The protein resides in the nucleus. It localises to the chromosome. It is found in the telomere. In terms of biological role, acts both as a regulator of telomere function and as a transcription regulator. Involved in the regulation of telomere length and protection as a component of the shelterin complex (telosome). Does not bind DNA directly: recruited to telomeric double-stranded 5'-TTAGGG-3' repeats via its interaction with terf2. Independently of its function in telomeres, also acts as a transcription regulator: recruited to extratelomeric 5'-TTAGGG-3' sites via its association with terf2 or other factors, and regulates gene expression. This chain is Telomeric repeat-binding factor 2-interacting protein 1 (terf2ip), found in Danio rerio (Zebrafish).